A 316-amino-acid chain; its full sequence is Probable inactive poly [ADP-ribose] polymerase SRO4 (316 aa).

The interval 1–28 (MDYSKTEETPINEEQGSTNSSESRSNEE) is disordered. The span at 14–23 (EQGSTNSSES) shows a compositional bias: low complexity. Residues 28–255 (ELFSDCDQQH…KSPWISFPVL (228 aa)) enclose the PARP catalytic domain. The region spanning 243-314 (KNPKSPWISF…IKSVGQKVHK (72 aa)) is the RST domain.

It is found in the nucleus. Probable inactive ADP-ribosyltransferase that may be involved in stress and developmental responses. The protein is Probable inactive poly [ADP-ribose] polymerase SRO4 (SRO4) of Arabidopsis thaliana (Mouse-ear cress).